The sequence spans 726 residues: Procollagen-lysine,2-oxoglutarate 5-dioxygenase 1 (726 aa).

The signal sequence occupies residues 1-18; the sequence is MRLLLLLAPLGWLLLAET. 2 N-linked (GlcNAc...) asparagine glycosylation sites follow: Asn-196 and Asn-537. The Fe2OG dioxygenase domain occupies 635-726; it reads QFDLAFVVRY…RYIAVSFVDP (92 aa). Residues His-655 and Asp-657 each contribute to the Fe cation site. An N-linked (GlcNAc...) asparagine glycan is attached at Asn-685. His-707 contributes to the Fe cation binding site. Residue Arg-717 is part of the active site.

Homodimer. Identified in a complex with P3H3 and P3H4. Requires Fe(2+) as cofactor. L-ascorbate is required as a cofactor.

Its subcellular location is the rough endoplasmic reticulum membrane. The catalysed reaction is L-lysyl-[collagen] + 2-oxoglutarate + O2 = (5R)-5-hydroxy-L-lysyl-[collagen] + succinate + CO2. Its function is as follows. Part of a complex composed of PLOD1, P3H3 and P3H4 that catalyzes hydroxylation of lysine residues in collagen alpha chains and is required for normal assembly and cross-linkling of collagen fibrils. Forms hydroxylysine residues in -Xaa-Lys-Gly- sequences in collagens. These hydroxylysines serve as sites of attachment for carbohydrate units and are essential for the stability of the intermolecular collagen cross-links. This Bos taurus (Bovine) protein is Procollagen-lysine,2-oxoglutarate 5-dioxygenase 1 (PLOD1).